The chain runs to 429 residues: Glutamate-1-semialdehyde 2,1-aminomutase 2 (429 aa).

Lys-268 is subject to N6-(pyridoxal phosphate)lysine.

Belongs to the class-III pyridoxal-phosphate-dependent aminotransferase family. HemL subfamily. In terms of assembly, homodimer. It depends on pyridoxal 5'-phosphate as a cofactor.

Its subcellular location is the cytoplasm. It carries out the reaction (S)-4-amino-5-oxopentanoate = 5-aminolevulinate. The protein operates within porphyrin-containing compound metabolism; protoporphyrin-IX biosynthesis; 5-aminolevulinate from L-glutamyl-tRNA(Glu): step 2/2. This chain is Glutamate-1-semialdehyde 2,1-aminomutase 2, found in Staphylococcus aureus (strain MRSA252).